Consider the following 135-residue polypeptide: Ribonuclease P protein component (135 aa).

Positions 115–135 (ETEPVSPVSPTSLPQNERGSP) are disordered. The segment covering 122–135 (VSPTSLPQNERGSP) has biased composition (polar residues).

This sequence belongs to the RnpA family. Consists of a catalytic RNA component (M1 or rnpB) and a protein subunit.

The enzyme catalyses Endonucleolytic cleavage of RNA, removing 5'-extranucleotides from tRNA precursor.. RNaseP catalyzes the removal of the 5'-leader sequence from pre-tRNA to produce the mature 5'-terminus. It can also cleave other RNA substrates such as 4.5S RNA. The protein component plays an auxiliary but essential role in vivo by binding to the 5'-leader sequence and broadening the substrate specificity of the ribozyme. This is Ribonuclease P protein component from Chloroflexus aggregans (strain MD-66 / DSM 9485).